The primary structure comprises 166 residues: 3-dehydroquinate dehydratase (166 aa).

The active-site Proton acceptor is the tyrosine 22. Residues asparagine 73, histidine 79, and aspartate 86 each contribute to the substrate site. Histidine 99 serves as the catalytic Proton donor. Substrate contacts are provided by residues 100-101 (IT) and arginine 110.

This sequence belongs to the type-II 3-dehydroquinase family. As to quaternary structure, homododecamer.

The catalysed reaction is 3-dehydroquinate = 3-dehydroshikimate + H2O. The protein operates within metabolic intermediate biosynthesis; chorismate biosynthesis; chorismate from D-erythrose 4-phosphate and phosphoenolpyruvate: step 3/7. In terms of biological role, catalyzes a trans-dehydration via an enolate intermediate. The sequence is that of 3-dehydroquinate dehydratase from Wolinella succinogenes (strain ATCC 29543 / DSM 1740 / CCUG 13145 / JCM 31913 / LMG 7466 / NCTC 11488 / FDC 602W) (Vibrio succinogenes).